The sequence spans 456 residues: MTQSENVAAAGGAKTEPKVRPAKALQGVKGMNDMLPADAPLWEHFENAARAMLRAYGYQQIRTPIVEHTQLFVRGIGEVTDIVEKEMYSFTDSLNGEQLTLRPEGTAAAVRATIEHNLLYDGPKRLWYTGPMFRHERPQRGRYRQFHQLGAEALGFAGPDVDAEIILMCQRLWDDLGLVGVRLELNSLGQAHERAAHREQLIKYLEGFQDILDDDSKRRLYTNPLRVLDTKNPALQEMAANAPKLIDFLGEESLAHFEGVQRLLKANNIPFKINPRLVRGLDYYNLTVFEWITDKLGAQGTIAGGGRYDPLIAQMGGKPAPACGWAMGIERIIELIREEGVVPDAAGCDVYLVHQGEAAAQQAMIAAERLRDAGLDVVLHASPDGKGGSFKSQMKRADTSGAAYAVIIGDDEVAAGVVQVKELRQREQAEGGGQQATVPAEGLVDYLIDAMVGASE.

The segment at 1–20 (MTQSENVAAAGGAKTEPKVR) is disordered.

The protein belongs to the class-II aminoacyl-tRNA synthetase family. As to quaternary structure, homodimer.

The protein localises to the cytoplasm. The catalysed reaction is tRNA(His) + L-histidine + ATP = L-histidyl-tRNA(His) + AMP + diphosphate + H(+). This chain is Histidine--tRNA ligase, found in Cupriavidus necator (strain ATCC 17699 / DSM 428 / KCTC 22496 / NCIMB 10442 / H16 / Stanier 337) (Ralstonia eutropha).